The chain runs to 300 residues: 33 kDa chaperonin (300 aa).

2 disulfides stabilise this stretch: Cys-235–Cys-237 and Cys-269–Cys-272.

It belongs to the HSP33 family. In terms of processing, under oxidizing conditions two disulfide bonds are formed involving the reactive cysteines. Under reducing conditions zinc is bound to the reactive cysteines and the protein is inactive.

The protein localises to the cytoplasm. Functionally, redox regulated molecular chaperone. Protects both thermally unfolding and oxidatively damaged proteins from irreversible aggregation. Plays an important role in the bacterial defense system toward oxidative stress. This is 33 kDa chaperonin from Pseudomonas fluorescens (strain ATCC BAA-477 / NRRL B-23932 / Pf-5).